The following is a 229-amino-acid chain: Heptaprenylglyceryl phosphate synthase (229 aa).

Residue K12 participates in sn-glycerol 1-phosphate binding. Mg(2+) contacts are provided by D14 and S40. Sn-glycerol 1-phosphate-binding positions include 159–164 (YLEYSG), G189, and 209–210 (GN).

It belongs to the GGGP/HepGP synthase family. Group I subfamily. Homodimer. It depends on Mg(2+) as a cofactor.

It carries out the reaction sn-glycerol 1-phosphate + all-trans-heptaprenyl diphosphate = 3-heptaprenyl-sn-glycero-1-phosphate + diphosphate. Its pathway is membrane lipid metabolism; glycerophospholipid metabolism. Prenyltransferase that catalyzes in vivo the transfer of the heptaprenyl moiety of heptaprenyl pyrophosphate (HepPP; 35 carbon atoms) to the C3 hydroxyl of sn-glycerol-1-phosphate (G1P), producing heptaprenylglyceryl phosphate (HepGP). This reaction is an ether-bond-formation step in the biosynthesis of archaea-type G1P-based membrane lipids found in Bacillales. The polypeptide is Heptaprenylglyceryl phosphate synthase (Bacillus anthracis (strain A0248)).